A 213-amino-acid chain; its full sequence is 2-C-methyl-D-erythritol 4-phosphate cytidylyltransferase (213 aa).

It belongs to the IspD/TarI cytidylyltransferase family. IspD subfamily.

It carries out the reaction 2-C-methyl-D-erythritol 4-phosphate + CTP + H(+) = 4-CDP-2-C-methyl-D-erythritol + diphosphate. It participates in isoprenoid biosynthesis; isopentenyl diphosphate biosynthesis via DXP pathway; isopentenyl diphosphate from 1-deoxy-D-xylulose 5-phosphate: step 2/6. Its function is as follows. Catalyzes the formation of 4-diphosphocytidyl-2-C-methyl-D-erythritol from CTP and 2-C-methyl-D-erythritol 4-phosphate (MEP). The polypeptide is 2-C-methyl-D-erythritol 4-phosphate cytidylyltransferase (Thermus thermophilus (strain ATCC BAA-163 / DSM 7039 / HB27)).